The sequence spans 157 residues: SsrA-binding protein (157 aa).

The protein belongs to the SmpB family.

It localises to the cytoplasm. Required for rescue of stalled ribosomes mediated by trans-translation. Binds to transfer-messenger RNA (tmRNA), required for stable association of tmRNA with ribosomes. tmRNA and SmpB together mimic tRNA shape, replacing the anticodon stem-loop with SmpB. tmRNA is encoded by the ssrA gene; the 2 termini fold to resemble tRNA(Ala) and it encodes a 'tag peptide', a short internal open reading frame. During trans-translation Ala-aminoacylated tmRNA acts like a tRNA, entering the A-site of stalled ribosomes, displacing the stalled mRNA. The ribosome then switches to translate the ORF on the tmRNA; the nascent peptide is terminated with the 'tag peptide' encoded by the tmRNA and targeted for degradation. The ribosome is freed to recommence translation, which seems to be the essential function of trans-translation. This is SsrA-binding protein from Chromohalobacter salexigens (strain ATCC BAA-138 / DSM 3043 / CIP 106854 / NCIMB 13768 / 1H11).